The primary structure comprises 356 residues: Probable dual-specificity RNA methyltransferase RlmN (356 aa).

Glu100 serves as the catalytic Proton acceptor. The Radical SAM core domain maps to 106 to 340; the sequence is TNSRLTTCVS…VSLRASRGLD (235 aa). Cys113 and Cys345 form a disulfide bridge. The [4Fe-4S] cluster site is built by Cys120, Cys124, and Cys127. S-adenosyl-L-methionine-binding positions include 167-168, Ser197, 226-228, and Asn302; these read GE and SLH. Cys345 functions as the S-methylcysteine intermediate in the catalytic mechanism.

Belongs to the radical SAM superfamily. RlmN family. [4Fe-4S] cluster is required as a cofactor.

Its subcellular location is the cytoplasm. The enzyme catalyses adenosine(2503) in 23S rRNA + 2 reduced [2Fe-2S]-[ferredoxin] + 2 S-adenosyl-L-methionine = 2-methyladenosine(2503) in 23S rRNA + 5'-deoxyadenosine + L-methionine + 2 oxidized [2Fe-2S]-[ferredoxin] + S-adenosyl-L-homocysteine. The catalysed reaction is adenosine(37) in tRNA + 2 reduced [2Fe-2S]-[ferredoxin] + 2 S-adenosyl-L-methionine = 2-methyladenosine(37) in tRNA + 5'-deoxyadenosine + L-methionine + 2 oxidized [2Fe-2S]-[ferredoxin] + S-adenosyl-L-homocysteine. Specifically methylates position 2 of adenine 2503 in 23S rRNA and position 2 of adenine 37 in tRNAs. This Prochlorococcus marinus (strain MIT 9211) protein is Probable dual-specificity RNA methyltransferase RlmN.